The primary structure comprises 102 residues: Small ribosomal subunit protein uS17 (102 aa).

The disordered stretch occupies residues 1 to 27 (MEQTEEHTDTHTDEQDEAVDRNDRKER).

Belongs to the universal ribosomal protein uS17 family. In terms of assembly, part of the 30S ribosomal subunit.

In terms of biological role, one of the primary rRNA binding proteins, it binds specifically to the 5'-end of 16S ribosomal RNA. This chain is Small ribosomal subunit protein uS17, found in Salinibacter ruber (strain DSM 13855 / M31).